An 899-amino-acid chain; its full sequence is Toll-like receptor 4 (899 aa).

The N-terminal stretch at 1–46 (MCPLQIHVLHLIQGNQKNRKGKYVNMTRQLWYILPLLFLLCHCVTS) is a signal peptide. N-linked (GlcNAc...) asparagine glycosylation is found at Asn25, Asn75, Asn83, and Asn93. Residues 47–702 (ERRCYFSKIS…LERNCRSYTA (656 aa)) lie on the Extracellular side of the membrane. LRR repeat units follow at residues 83–103 (NESV…PDLP), 104–126 (RSLL…AFAR), 128–150 (QNLT…LTAG), 155–179 (LTRL…VLSD), 181–202 (VSLN…MRKI), 203–229 (HALK…YFQN), and 230–253 (VHGI…TFSY). Residues Asn129, Asn137, Asn146, and Asn168 are each glycosylated (N-linked (GlcNAc...) asparagine). N-linked (GlcNAc...) asparagine glycans are attached at residues Asn237, Asn256, Asn275, and Asn313. LRR repeat units follow at residues 257 to 282 (LTHL…DLKN), 313 to 336 (NTSL…VLMY), 338 to 360 (PKTL…ALET), and 363 to 386 (LVNL…IFSN). N-linked (GlcNAc...) asparagine glycans are attached at residues Asn388, Asn432, and Asn463. LRR repeat units lie at residues 468-493 (HYPL…VFYD), 501-524 (LEGL…FFDY), 526-549 (TGLK…EKGE), 554-577 (LLKL…ILRN), 579-601 (ISLE…LKHI), 602-624 (KGLR…VMRE), and 631-654 (SSNL…HFLR). Asn516 carries N-linked (GlcNAc...) asparagine glycosylation. Residues Asn633, Asn637, and Asn668 are each glycosylated (N-linked (GlcNAc...) asparagine). Residues 703–723 (VIVLFSCVFVILLTVIVCGVV) form a helical membrane-spanning segment. The Cytoplasmic segment spans residues 724–899 (YRYRWKLRYL…WRKLRDPISM (176 aa)). Positions 756 to 897 (YEFDAFISYA…IFWRKLRDPI (142 aa)) constitute a TIR domain.

This sequence belongs to the Toll-like receptor family. In terms of tissue distribution, expressed in all tissues tested. The highest expression is in the hepatopancreas, with moderate expression in the gills, and low expression in the gonads, adductor muscle, hemocytes, and mantle.

Its subcellular location is the cell membrane. Its function is as follows. May be involved in the innate immune response. This is Toll-like receptor 4 from Pinctada imbricata (Atlantic pearl-oyster).